A 411-amino-acid chain; its full sequence is Alpha-galactosidase (411 aa).

An N-terminal signal peptide occupies residues 1–24; that stretch reads MATHYSIIGGMIIVVLLMIIGSEG. Residues 25-47 constitute a propeptide that is removed on maturation; it reads GRLLEKKNRTSAEAEHYNVRRYL. Asn32 carries N-linked (GlcNAc...) asparagine glycosylation. A disulfide bond links Cys68 and Cys100. N-linked (GlcNAc...) asparagine glycosylation occurs at Asn145. Cys148 and Cys179 are oxidised to a cystine. Asp177 (nucleophile) is an active-site residue. Residue 210-214 coordinates substrate; the sequence is EWGWE. Asp232 serves as the catalytic Proton donor. The N-linked (GlcNAc...) asparagine glycan is linked to Asn352.

Belongs to the glycosyl hydrolase 27 family.

It carries out the reaction Hydrolysis of terminal, non-reducing alpha-D-galactose residues in alpha-D-galactosides, including galactose oligosaccharides, galactomannans and galactolipids.. In terms of biological role, involved in the hydrolysis of the galactomannan, it splits alpha-linked galactose moieties. It is particularly suitable for the hydrolysis of guar gum to a gum with improved gelling properties. Preferentially cleaves alpha-1,6 glycoside linkages. The sequence is that of Alpha-galactosidase from Cyamopsis tetragonoloba (Guar).